Reading from the N-terminus, the 266-residue chain is 3-methyl-2-oxobutanoate hydroxymethyltransferase (266 aa).

The Mg(2+) site is built by Asp-45 and Asp-84. 3-methyl-2-oxobutanoate-binding positions include 45-46 (DS), Asp-84, and Lys-112. Glu-114 lines the Mg(2+) pocket. Glu-181 acts as the Proton acceptor in catalysis.

The protein belongs to the PanB family. In terms of assembly, homodecamer; pentamer of dimers. The cofactor is Mg(2+).

It localises to the cytoplasm. The enzyme catalyses 3-methyl-2-oxobutanoate + (6R)-5,10-methylene-5,6,7,8-tetrahydrofolate + H2O = 2-dehydropantoate + (6S)-5,6,7,8-tetrahydrofolate. The protein operates within cofactor biosynthesis; (R)-pantothenate biosynthesis; (R)-pantoate from 3-methyl-2-oxobutanoate: step 1/2. Catalyzes the reversible reaction in which hydroxymethyl group from 5,10-methylenetetrahydrofolate is transferred onto alpha-ketoisovalerate to form ketopantoate. The sequence is that of 3-methyl-2-oxobutanoate hydroxymethyltransferase from Pseudomonas syringae pv. tomato (strain ATCC BAA-871 / DC3000).